Here is a 422-residue protein sequence, read N- to C-terminus: Platelet-activating factor acetylhydrolase (422 aa).

Residues Met-1–Ser-21 form the signal peptide. Ser-266 (nucleophile) is an active-site residue. Residue Asp-289 is the Charge relay system of the active site. Asn-331 carries N-linked (GlcNAc...) asparagine glycosylation. Catalysis depends on His-345, which acts as the Charge relay system.

It belongs to the AB hydrolase superfamily. Lipase family. Plasma.

Its subcellular location is the secreted. It localises to the extracellular space. It carries out the reaction a 1-O-alkyl-2-acetyl-sn-glycero-3-phosphocholine + H2O = a 1-O-alkyl-sn-glycero-3-phosphocholine + acetate + H(+). Its function is as follows. Modulates the action of platelet-activating factor (PAF) by hydrolyzing the sn-2 ester bond to yield the biologically inactive lyso-PAF. Has a specificity for substrates with a short residue at the sn-2 position. It is inactive against long-chain phospholipids. The polypeptide is Platelet-activating factor acetylhydrolase (PLA2G7) (Gallus gallus (Chicken)).